The primary structure comprises 477 residues: MSKKLHIKTWGCQMNEYDSSKMADLLDASNGYTLTEEPEEADVLLLNTCSIREKAQEKVFHQLGRWKKLKANKPGLVIGVGGCVASQEGDNIRTRAPYVDIVFGPQTLHRLPTMIKQVQEGRGAQVDVAFPEIEKFDSLPEPRAEGATAFVSIMEGCSKYCSFCVVPYTRGEEVSRPLDDVLYEIAQLAQQGVREVNLLGQNVNAYRGPTFDGGICTFAELLRLVAAIDGIDRIRYTTSHPIEFTDDIIEVYKDTPEVVSFLHLPVQSGSDRILTMMKRPHTVLEYKSKIRRLRAARPDITISSDFIVGFPNETDEDFEATMKLIEEINFDMSFSFIYSPRPGTPAADLPDDVDMEVKKARLTRLQHVINNQSMQIGRAMLGSTQRILVEGPSKLDPMQLCGRTENNRVVNFEGPHTLIGGFADVEITEVRPNSLRGKFLRGENEMNLRIATAPSEILARRPDNVPDPLGVAAFTPH.

Positions 3 to 120 constitute an MTTase N-terminal domain; the sequence is KKLHIKTWGC…LPTMIKQVQE (118 aa). Residues Cys-12, Cys-49, Cys-83, Cys-157, Cys-161, and Cys-164 each coordinate [4Fe-4S] cluster. One can recognise a Radical SAM core domain in the interval 143-375; that stretch reads RAEGATAFVS…QHVINNQSMQ (233 aa). The region spanning 378–441 is the TRAM domain; that stretch reads RAMLGSTQRI…PNSLRGKFLR (64 aa).

Belongs to the methylthiotransferase family. MiaB subfamily. In terms of assembly, monomer. [4Fe-4S] cluster is required as a cofactor.

The protein localises to the cytoplasm. It catalyses the reaction N(6)-dimethylallyladenosine(37) in tRNA + (sulfur carrier)-SH + AH2 + 2 S-adenosyl-L-methionine = 2-methylsulfanyl-N(6)-dimethylallyladenosine(37) in tRNA + (sulfur carrier)-H + 5'-deoxyadenosine + L-methionine + A + S-adenosyl-L-homocysteine + 2 H(+). Its function is as follows. Catalyzes the methylthiolation of N6-(dimethylallyl)adenosine (i(6)A), leading to the formation of 2-methylthio-N6-(dimethylallyl)adenosine (ms(2)i(6)A) at position 37 in tRNAs that read codons beginning with uridine. The polypeptide is tRNA-2-methylthio-N(6)-dimethylallyladenosine synthase (Aeromonas hydrophila subsp. hydrophila (strain ATCC 7966 / DSM 30187 / BCRC 13018 / CCUG 14551 / JCM 1027 / KCTC 2358 / NCIMB 9240 / NCTC 8049)).